Reading from the N-terminus, the 54-residue chain is Large ribosomal subunit protein bL33 (54 aa).

Belongs to the bacterial ribosomal protein bL33 family.

In Thermobifida fusca (strain YX), this protein is Large ribosomal subunit protein bL33.